The following is a 619-amino-acid chain: BUD13 homolog (619 aa).

Residues 20 to 56 (ADAGVDRGSESGRKRRKKRPKPGGAGGKGMRIVDDDV) are disordered. S28 bears the Phosphoserine mark. Residue K65 forms a Glycyl lysine isopeptide (Lys-Gly) (interchain with G-Cter in SUMO2) linkage. The disordered stretch occupies residues 106–429 (LGGHNEDLPS…AHMYSGAKTG (324 aa)). The segment covering 109–128 (HNEDLPSNRHFRHDTPDSSP) has biased composition (basic and acidic residues). A Phosphothreonine modification is found at T123. S127 carries the post-translational modification Phosphoserine. T135 bears the Phosphothreonine mark. S139 carries the phosphoserine modification. Basic and acidic residues predominate over residues 139-160 (SPRKDRHDTPDPSPRRARHDTP). T147 bears the Phosphothreonine mark. Position 151 is a phosphoserine (S151). T159 carries the phosphothreonine modification. Phosphoserine is present on residues S163, S172, S175, S197, S201, S214, S222, S226, S235, S236, S240, S248, S258, S259, S271, and S281. Polar residues predominate over residues 246–264 (NNSPDTSRRTLGSSDTQQL). The segment covering 289-306 (KAPERASSKTSPHWKESG) has biased composition (basic and acidic residues). S325 is subject to Phosphoserine. The segment covering 335 to 353 (HFGDKKQLDSKGDCQKATD) has biased composition (basic and acidic residues). Residues S354, S357, S358, S391, and S407 each carry the phosphoserine modification. Low complexity predominate over residues 404–415 (SDLSPPRRSQPP). Residues 433–520 (TDIQREQQEL…VEDAMKEMQK (88 aa)) are a coiled coil. The residue at position 494 (Y494) is a Phosphotyrosine. A disordered region spans residues 538 to 578 (QEREGDPMANFIKKNKAKENKNKKVRPRYSGPAPPPNRFNI). S567 carries the phosphoserine modification.

The protein belongs to the CWC26 family. As to quaternary structure, part of the activated spliceosome B/catalytic step 1 spliceosome, one of the forms of the spliceosome which has a well-formed active site but still cannot catalyze the branching reaction and is composed of at least 52 proteins, the U2, U5 and U6 snRNAs and the pre-mRNA. Component of the minor spliceosome, which splices U12-type introns.

The protein resides in the nucleus. Functionally, involved in pre-mRNA splicing as component of the activated spliceosome. As a component of the minor spliceosome, involved in the splicing of U12-type introns in pre-mRNAs. In Homo sapiens (Human), this protein is BUD13 homolog (BUD13).